A 412-amino-acid chain; its full sequence is Keratin, type I microfibrillar 48 kDa, component 8C-1 (412 aa).

Serine 1 carries the N-acetylserine modification. Residues 1 to 55 (SFNFCLPNLSFRSSCSSRPCVPSSCCGTTLPGACNIPANVGSCNWFCEGSFDGNE) are head. An IF rod domain is found at 55 to 366 (EKETMQFLND…GLLDSEDCKL (312 aa)). The coil 1A stretch occupies residues 56–90 (KETMQFLNDRLASYLEKVRQLERENAELESRILER). The interval 91-101 (SQQQEPLVCPN) is linker 1. The tract at residues 102–202 (YQSYFRTIEE…HEEEVNTLRS (101 aa)) is coil 1B. The interval 203–218 (QLGDRLNVEVDAAPTV) is linker 12. Positions 219-362 (DLNRVLNETR…NTYRGLLDSE (144 aa)) are coil 2. Residues 363 to 412 (DCKLPCNPCATTNACGKTITPCISSPCAPAAPCTPCVPRSRCGPCNSYVR) are tail.

It belongs to the intermediate filament family.

Functionally, wool microfibrillar keratin. The polypeptide is Keratin, type I microfibrillar 48 kDa, component 8C-1 (Ovis aries (Sheep)).